Here is a 51-residue protein sequence, read N- to C-terminus: UPF0391 membrane protein Psyc_0130 (51 aa).

2 consecutive transmembrane segments (helical) span residues 6–26 (IIFA…VAGL) and 28–47 (ANFA…VAFV).

It belongs to the UPF0391 family.

The protein localises to the cell membrane. In Psychrobacter arcticus (strain DSM 17307 / VKM B-2377 / 273-4), this protein is UPF0391 membrane protein Psyc_0130.